We begin with the raw amino-acid sequence, 440 residues long: Suppressor of cytokine signaling 4 (440 aa).

A compositionally biased stretch (polar residues) spans 1–10; the sequence is MAENNENISK. The segment at 1 to 29 is disordered; it reads MAENNENISKNVDVRPKTSRSRSADRKDG. Residues 12–29 show a composition bias toward basic and acidic residues; it reads VDVRPKTSRSRSADRKDG. In terms of domain architecture, SH2 spans 286–381; that stretch reads CYWGVMDKYA…FFEPLLSTPL (96 aa). The region spanning 376 to 425 is the SOCS box domain; the sequence is LLSTPLIRTFPFSLQHICRTVICNCTTYDGIDALPIPSSMKLYLKEYHYK.

It participates in protein modification; protein ubiquitination. Functionally, SOCS family proteins form part of a classical negative feedback system that regulates cytokine signal transduction. Substrate-recognition component of a SCF-like ECS (Elongin BC-CUL2/5-SOCS-box protein) E3 ubiquitin-protein ligase complex which mediates the ubiquitination and subsequent proteasomal degradation of target proteins. Inhibits EGF signaling by mediating the degradation of the Tyr-phosphorylated EGF receptor/EGFR. This chain is Suppressor of cytokine signaling 4 (SOCS4), found in Homo sapiens (Human).